The following is a 256-amino-acid chain: Acetyl-coenzyme A carboxylase carboxyl transferase subunit alpha (256 aa).

The 236-residue stretch at 1–236 (MTDVSRVLKE…KANLIEQITS (236 aa)) folds into the CoA carboxyltransferase C-terminal domain.

This sequence belongs to the AccA family. As to quaternary structure, acetyl-CoA carboxylase is a heterohexamer composed of biotin carboxyl carrier protein (AccB), biotin carboxylase (AccC) and two subunits each of ACCase subunit alpha (AccA) and ACCase subunit beta (AccD).

It localises to the cytoplasm. The enzyme catalyses N(6)-carboxybiotinyl-L-lysyl-[protein] + acetyl-CoA = N(6)-biotinyl-L-lysyl-[protein] + malonyl-CoA. The protein operates within lipid metabolism; malonyl-CoA biosynthesis; malonyl-CoA from acetyl-CoA: step 1/1. Functionally, component of the acetyl coenzyme A carboxylase (ACC) complex. First, biotin carboxylase catalyzes the carboxylation of biotin on its carrier protein (BCCP) and then the CO(2) group is transferred by the carboxyltransferase to acetyl-CoA to form malonyl-CoA. This is Acetyl-coenzyme A carboxylase carboxyl transferase subunit alpha from Streptococcus pyogenes serotype M12 (strain MGAS2096).